Consider the following 802-residue polypeptide: Phenylalanine--tRNA ligase beta subunit (802 aa).

The region spanning 40–155 (SASLKNVVVG…EHVETGVSAI (116 aa)) is the tRNA-binding domain. The B5 domain maps to 409-484 (KAVNKIETSL…RIYGYDEIPV (76 aa)). Positions 462, 468, 471, and 472 each coordinate Mg(2+). Residues 709 to 802 (PRYPEMTRDL…LQAKLHAIIR (94 aa)) enclose the FDX-ACB domain.

This sequence belongs to the phenylalanyl-tRNA synthetase beta subunit family. Type 1 subfamily. Tetramer of two alpha and two beta subunits. It depends on Mg(2+) as a cofactor.

The protein resides in the cytoplasm. It carries out the reaction tRNA(Phe) + L-phenylalanine + ATP = L-phenylalanyl-tRNA(Phe) + AMP + diphosphate + H(+). The sequence is that of Phenylalanine--tRNA ligase beta subunit from Listeria innocua serovar 6a (strain ATCC BAA-680 / CLIP 11262).